Consider the following 331-residue polypeptide: Ribosomal RNA small subunit methyltransferase H (331 aa).

S-adenosyl-L-methionine is bound by residues 49-51 (GGH), Asp-68, Leu-102, Asp-116, and Gln-123.

It belongs to the methyltransferase superfamily. RsmH family.

The protein resides in the cytoplasm. It catalyses the reaction cytidine(1402) in 16S rRNA + S-adenosyl-L-methionine = N(4)-methylcytidine(1402) in 16S rRNA + S-adenosyl-L-homocysteine + H(+). Specifically methylates the N4 position of cytidine in position 1402 (C1402) of 16S rRNA. This is Ribosomal RNA small subunit methyltransferase H from Renibacterium salmoninarum (strain ATCC 33209 / DSM 20767 / JCM 11484 / NBRC 15589 / NCIMB 2235).